The primary structure comprises 210 residues: uncharacterized protein (210 aa).

The next 5 helical transmembrane spans lie at 42-62 (ITLGIAFWGMLSMLGLAVLFV), 66-86 (ALHGVIMLLGGSYLAYLGFLM), 126-146 (VVVYFSSVMSLVLVNITEMWQ), 147-167 (IILAFAVIVVETFCYFYVISL), and 189-209 (AGIVFLFFGCVLVYNGINEII).

This sequence belongs to the Rht family.

The protein localises to the cell membrane. This is an uncharacterized protein from Haemophilus influenzae (strain ATCC 51907 / DSM 11121 / KW20 / Rd).